A 162-amino-acid polypeptide reads, in one-letter code: Phenazine biosynthesis protein PhzB 2 (162 aa).

Thr-91 carries the post-translational modification Phosphothreonine.

The protein belongs to the PhzA/PhzB family.

In terms of biological role, involved in the biosynthesis of the antibiotic phenazine, a nitrogen-containing heterocyclic molecule having important roles in virulence, competition and biological control. The sequence is that of Phenazine biosynthesis protein PhzB 2 (phzB2) from Pseudomonas aeruginosa (strain UCBPP-PA14).